The chain runs to 208 residues: Ribonuclease HII (208 aa).

The RNase H type-2 domain maps to 13–202 (DLVAGVDEVG…VRQAYEAREA (190 aa)). Positions 19, 20, and 111 each coordinate a divalent metal cation.

This sequence belongs to the RNase HII family. The cofactor is Mn(2+). Mg(2+) is required as a cofactor.

It localises to the cytoplasm. The enzyme catalyses Endonucleolytic cleavage to 5'-phosphomonoester.. Its function is as follows. Endonuclease that specifically degrades the RNA of RNA-DNA hybrids. The chain is Ribonuclease HII from Pseudomonas fluorescens (strain ATCC BAA-477 / NRRL B-23932 / Pf-5).